Consider the following 202-residue polypeptide: Large ribosomal subunit protein uL4 (202 aa).

The segment at 40–71 (GRQGSKAQKTRSQVSGGGKKPWRQKGSGRARA) is disordered. Polar residues predominate over residues 44–53 (SKAQKTRSQV).

Belongs to the universal ribosomal protein uL4 family. As to quaternary structure, part of the 50S ribosomal subunit.

Its function is as follows. One of the primary rRNA binding proteins, this protein initially binds near the 5'-end of the 23S rRNA. It is important during the early stages of 50S assembly. It makes multiple contacts with different domains of the 23S rRNA in the assembled 50S subunit and ribosome. Functionally, forms part of the polypeptide exit tunnel. The polypeptide is Large ribosomal subunit protein uL4 (Hahella chejuensis (strain KCTC 2396)).